We begin with the raw amino-acid sequence, 407 residues long: Phosphoglycerate kinase (407 aa).

Substrate is bound by residues 27–29, arginine 43, 66–69, arginine 125, and arginine 165; these read DLN and HLGR. Residues lysine 215, glycine 303, glutamate 334, and 363-366 contribute to the ATP site; that span reads GGDS.

Belongs to the phosphoglycerate kinase family. Monomer.

The protein localises to the cytoplasm. It catalyses the reaction (2R)-3-phosphoglycerate + ATP = (2R)-3-phospho-glyceroyl phosphate + ADP. It participates in carbohydrate degradation; glycolysis; pyruvate from D-glyceraldehyde 3-phosphate: step 2/5. In Mycobacterium sp. (strain JLS), this protein is Phosphoglycerate kinase.